We begin with the raw amino-acid sequence, 555 residues long: Glutamate--tRNA ligase (555 aa).

A 'HIGH' region motif is present at residues 103–113 (PNPSGPLHIGH).

Belongs to the class-I aminoacyl-tRNA synthetase family. Glutamate--tRNA ligase type 2 subfamily.

It localises to the cytoplasm. The catalysed reaction is tRNA(Glu) + L-glutamate + ATP = L-glutamyl-tRNA(Glu) + AMP + diphosphate. In terms of biological role, catalyzes the attachment of glutamate to tRNA(Glu) in a two-step reaction: glutamate is first activated by ATP to form Glu-AMP and then transferred to the acceptor end of tRNA(Glu). The sequence is that of Glutamate--tRNA ligase from Methanobrevibacter smithii (strain ATCC 35061 / DSM 861 / OCM 144 / PS).